Consider the following 125-residue polypeptide: Protein ApaG (125 aa).

Positions 3 to 125 constitute an ApaG domain; that stretch reads TAVTEGIEVT…FPLVVPGTLN (123 aa).

The sequence is that of Protein ApaG from Anaeromyxobacter sp. (strain K).